A 397-amino-acid polypeptide reads, in one-letter code: Phosphoglycerate kinase (397 aa).

Substrate-binding positions include 25–27 (DLN), Arg41, 64–67 (HLGR), Arg118, and Arg151. ATP contacts are provided by residues Lys202, Glu324, and 350 to 353 (GGDT).

This sequence belongs to the phosphoglycerate kinase family. In terms of assembly, monomer.

The protein localises to the cytoplasm. It catalyses the reaction (2R)-3-phosphoglycerate + ATP = (2R)-3-phospho-glyceroyl phosphate + ADP. It participates in carbohydrate degradation; glycolysis; pyruvate from D-glyceraldehyde 3-phosphate: step 2/5. The chain is Phosphoglycerate kinase from Herminiimonas arsenicoxydans.